A 315-amino-acid polypeptide reads, in one-letter code: MVDFQLNNFSFDPVVSLGFAAFLFLLMALPISFWAVAGSSDSSKARFLVAISNLFLTSQLILRWWQSGHFPISNLYESLCFLTWGCTLAQLFLERAWRSPIVSAVATPVSLLSIGFASFVLPENLQSSAPLVPALRSSWLVMHVSVIMCSYAALLIGSILSFGVFLVDGKKQFNIRNSSFGSGSFRQSSELYLDERNENLNSIQPIEFTNAEQLDSLSYRSITAGFLLLTVGLISGAVWANEAWGSWWSWDPKETWALICWLVYAAYLHTRITRGWQGKKPAILAIAGFFVIIVCYIGVNLLGVGLHSYGWFFDA.

7 helical membrane-spanning segments follow: residues 17 to 37 (LGFA…WAVA), 72 to 92 (ISNL…AQLF), 101 to 121 (IVSA…SFVL), 146 to 166 (VIMC…GVFL), 221 to 241 (SITA…VWAN), 255 to 272 (TWAL…HTRI), and 282 to 302 (AILA…VNLL).

The protein belongs to the CcmF/CycK/Ccl1/NrfE/CcsA family. May interact with ccs1.

It is found in the cellular thylakoid membrane. In terms of biological role, required during biogenesis of c-type cytochromes (cytochrome c6 and cytochrome f) at the step of heme attachment. The chain is Cytochrome c biogenesis protein CcsA from Prochlorococcus marinus (strain NATL2A).